The chain runs to 287 residues: tRNA uridine(34) hydroxylase (287 aa).

One can recognise a Rhodanese domain in the interval 132-226; the sequence is EGRPVVMLDT…YFEEVGGAHY (95 aa). The active-site Cysteine persulfide intermediate is the Cys186.

Belongs to the TrhO family.

The catalysed reaction is uridine(34) in tRNA + AH2 + O2 = 5-hydroxyuridine(34) in tRNA + A + H2O. Catalyzes oxygen-dependent 5-hydroxyuridine (ho5U) modification at position 34 in tRNAs. The chain is tRNA uridine(34) hydroxylase from Paraburkholderia xenovorans (strain LB400).